The sequence spans 507 residues: Glutamate--tRNA ligase (507 aa).

The 'HIGH' region motif lies at 14 to 24 (PSPTGPLHIGG). The short motif at 262–266 (KLSKR) is the 'KMSKS' region element. K265 lines the ATP pocket.

It belongs to the class-I aminoacyl-tRNA synthetase family. Glutamate--tRNA ligase type 1 subfamily. In terms of assembly, monomer.

The protein localises to the cytoplasm. It carries out the reaction tRNA(Glu) + L-glutamate + ATP = L-glutamyl-tRNA(Glu) + AMP + diphosphate. Its function is as follows. Catalyzes the attachment of glutamate to tRNA(Glu) in a two-step reaction: glutamate is first activated by ATP to form Glu-AMP and then transferred to the acceptor end of tRNA(Glu). This is Glutamate--tRNA ligase from Porphyromonas gingivalis (strain ATCC 33277 / DSM 20709 / CIP 103683 / JCM 12257 / NCTC 11834 / 2561).